A 366-amino-acid chain; its full sequence is Aldo-keto reductase AFTS1 (366 aa).

An NADP(+)-binding site is contributed by aspartate 75. Tyrosine 80 acts as the Proton donor in catalysis. Histidine 172 is a binding site for substrate. NADP(+)-binding positions include 202–203 (SS), glutamine 228, 257–267 (GSLASGRLARP), and 329–337 (SSVERIDEA).

It belongs to the aldo/keto reductase family.

Its pathway is mycotoxin biosynthesis. Functionally, aldo-keto reductase; part of the gene clusters that mediate the biosynthesis of the host-selective toxins (HSTs) AF-toxins responsible for Alternaria black spot of strawberry disease by the strawberry pathotype. AF-toxin I and III are valine derivatives of 2,3-dyhydroxy-isovaleric acid and 2-hydroxy-isovaleric acid respectively, while AF II is an isoleucine derivative of 2-hydroxy-valeric acid. These derivatives are bound to a 9,10-epoxy-8-hydroxy-9-methyl-decatrienoic acid (EDA) moiety. On cellular level, AF-toxins affect plasma membrane of susceptible cells and cause a sudden increase in loss of K(+) after a few minutes of toxin treatment. The aldo-keto reductase AFTS1 catalyzes the conversion of 2-keto-isovaleric acid (2-KIV) to 2-hydroxy-isovaleric acid (2-HIV) by reduction of its ketone to an alcohol. The acyl-CoA ligase AFT1, the hydrolase AFT2 and the enoyl-CoA hydratases AFT3 and AFT6, but also the polyketide synthase AFT9, the acyl-CoA dehydrogenase AFT10, the cytochrome P450 monooxygenase AFT11 and the oxidoreductase AFT12 are all involved in the biosynthesis of the AK-, AF- and ACT-toxin common EDA structural moiety. The exact function of each enzyme, and of additional enzymes identified within the AF-toxin clusters have still to be determined. The polypeptide is Aldo-keto reductase AFTS1 (Alternaria alternata (Alternaria rot fungus)).